The chain runs to 706 residues: Choline transporter-like protein 2 (706 aa).

Over 1–33 (MGGERQHYYGKHGTPQKYDPTFKGPIYHRGCTD) the chain is Cytoplasmic. At threonine 14 the chain carries Phosphothreonine. Residues 34–54 (VICCVFLLLAIVGYVAVGIIA) form a helical membrane-spanning segment. Topologically, residues 55 to 232 (WTHGDPRKVI…RIFEDYTVSW (178 aa)) are extracellular. N-linked (GlcNAc...) asparagine glycans are attached at residues asparagine 187 and asparagine 200. A helical membrane pass occupies residues 233–253 (YWIIIGLVIAMVLSLLFIILL). The Cytoplasmic portion of the chain corresponds to 254–256 (RFL). A helical transmembrane segment spans residues 257-277 (AGIMVWVMIVMVILVLGYGIF). The Extracellular portion of the chain corresponds to 278–315 (HCYMEYSRLRGEAGSDISLVDLGFQTDLRVYLHLRQTW). A helical membrane pass occupies residues 316–336 (MAFMIILSILEVIIILLLIFL). The Cytoplasmic portion of the chain corresponds to 337-364 (RKRILIAIALIKEASRAVGYVMCSMLYP). Residues 365 to 385 (LVTFLLLCLCIAYWASTAIFL) traverse the membrane as a helical segment. Residues 386 to 440 (STSNEAVYKIFSDTDCQAVGKTCNPENFSSSSEFHLCPGAHCQFAFYGGESTYHR) lie on the Extracellular side of the membrane. A helical membrane pass occupies residues 441 to 461 (ALLGLQIFNAFMFFWLANFVL). Residues 462 to 504 (ALGQVTLAGAFASYYWALKKPDDLPAFPLFSAFGRALRYHTGS) are Cytoplasmic-facing. The helical transmembrane segment at 505-525 (LAFGSLLLAIVQIIRVMLEYL) threads the bilayer. Over 526–563 (DQRLKAAENKFAKFLMTCLKCCFWCLEKFIKFLNRNAY) the chain is Extracellular. Residues 564-584 (IMIAIYGTNFCTSARNAFFLL) traverse the membrane as a helical segment. Residues 585–599 (MRNIIRVAVLDKVTD) lie on the Cytoplasmic side of the membrane. Residues 600-620 (FLFLLGKLLIVGSVGILAFFF) form a helical membrane-spanning segment. Residues 621-638 (FTHRIRIVQDTAPPLNYY) are Extracellular-facing. Residues 639-659 (WVPILTVIVGSYLIAHGFFSV) form a helical membrane-spanning segment. The Cytoplasmic portion of the chain corresponds to 660–706 (YGMCVDTLFLCFLEDLERNDGSMERPYFMSPTLKRLLNKTNRKPAES).

This sequence belongs to the CTL (choline transporter-like) family. As to quaternary structure, interacts with COCH. Post-translationally, N-glycosylated.

The protein resides in the cell membrane. The protein localises to the mitochondrion outer membrane. The catalysed reaction is choline(out) + n H(+)(in) = choline(in) + n H(+)(out). It catalyses the reaction ethanolamine(out) + n H(+)(in) = ethanolamine(in) + n H(+)(out). Its function is as follows. Choline/H+ antiporter, mainly in mitochodria. Also acts as a low-affinity ethanolamine/H+ antiporter, regulating the supply of extracellular ethanolamine (Etn) for the CDP-Etn pathway, redistribute intracellular Etn and balance the CDP-Cho and CDP-Etn arms of the Kennedy pathway. The chain is Choline transporter-like protein 2 (SLC44A2) from Sus scrofa (Pig).